We begin with the raw amino-acid sequence, 159 residues long: Peptide methionine sulfoxide reductase MsrB (159 aa).

The region spanning 14–137 is the MsrB domain; it reads TEKLKENLTE…NSASLKFIAK (124 aa). C126 functions as the Nucleophile in the catalytic mechanism.

Belongs to the MsrB Met sulfoxide reductase family.

It catalyses the reaction L-methionyl-[protein] + [thioredoxin]-disulfide + H2O = L-methionyl-(R)-S-oxide-[protein] + [thioredoxin]-dithiol. In Hathewaya histolytica (Clostridium histolyticum), this protein is Peptide methionine sulfoxide reductase MsrB.